A 231-amino-acid polypeptide reads, in one-letter code: Cytochrome c oxidase assembly factor 7A (231 aa).

5 Sel1-like repeats span residues 34–66 (PDGCNRLAEYFENIKKNFESAAGILKINCDQNE), 68–104 (SESFYKLGAYYVTGKGGLPVDLKAAYSCFLKSCNKGG), 108–145 (IDSCHNVGLLAHDGRVNDEKADAVTARDYYNKACDGNF), 146–182 (AASCFNLSATYLQGAPGIPKDMNKALHFSEKACSLGH), and 183–218 (VWGCANASRMYKLGDGVAKNDEKAESLKNRARDLHK).

Belongs to the hcp beta-lactamase family.

The protein localises to the mitochondrion intermembrane space. May be required for assembly of mitochondrial respiratory chain complexes. The chain is Cytochrome c oxidase assembly factor 7A (coa7-a) from Xenopus laevis (African clawed frog).